The chain runs to 312 residues: Nucleosome assembly protein 1-like 4 (312 aa).

Residues 24–78 adopt a coiled-coil conformation; that stretch reads VETLKNKLQALAEQHVDVLESLAPSVRKRVDVLMEIQSQHDELEVKFFEEKAALE. The short motif at 45–60 is the Nuclear export signal element; sequence LAPSVRKRVDVLMEIQ. The interval 288–312 is disordered; the sequence is EDYGASWVDDEEEDDNDDEYSDEEA.

It belongs to the nucleosome assembly protein (NAP) family.

The protein resides in the nucleus. It is found in the cytoplasm. In terms of biological role, may modulate chromatin structure by regulation of nucleosome assembly/disassembly. The sequence is that of Nucleosome assembly protein 1-like 4 from Oryza sativa subsp. indica (Rice).